A 178-amino-acid polypeptide reads, in one-letter code: ATP synthase subunit delta (178 aa).

This sequence belongs to the ATPase delta chain family. F-type ATPases have 2 components, F(1) - the catalytic core - and F(0) - the membrane proton channel. F(1) has five subunits: alpha(3), beta(3), gamma(1), delta(1), epsilon(1). F(0) has three main subunits: a(1), b(2) and c(10-14). The alpha and beta chains form an alternating ring which encloses part of the gamma chain. F(1) is attached to F(0) by a central stalk formed by the gamma and epsilon chains, while a peripheral stalk is formed by the delta and b chains.

The protein localises to the cell inner membrane. Its function is as follows. F(1)F(0) ATP synthase produces ATP from ADP in the presence of a proton or sodium gradient. F-type ATPases consist of two structural domains, F(1) containing the extramembraneous catalytic core and F(0) containing the membrane proton channel, linked together by a central stalk and a peripheral stalk. During catalysis, ATP synthesis in the catalytic domain of F(1) is coupled via a rotary mechanism of the central stalk subunits to proton translocation. In terms of biological role, this protein is part of the stalk that links CF(0) to CF(1). It either transmits conformational changes from CF(0) to CF(1) or is implicated in proton conduction. This is ATP synthase subunit delta from Hydrogenovibrio crunogenus (strain DSM 25203 / XCL-2) (Thiomicrospira crunogena).